A 275-amino-acid polypeptide reads, in one-letter code: Light-independent protochlorophyllide reductase iron-sulfur ATP-binding protein (275 aa).

Residues 12 to 17 and K41 each bind ATP; that span reads GIGKST. A Mg(2+)-binding site is contributed by S16. Residues C97 and C131 each coordinate [4Fe-4S] cluster. 182–183 lines the ATP pocket; it reads NR.

The protein belongs to the NifH/BchL/ChlL family. In terms of assembly, homodimer. Protochlorophyllide reductase is composed of three subunits; BchL, BchN and BchB. The cofactor is [4Fe-4S] cluster.

The catalysed reaction is chlorophyllide a + oxidized 2[4Fe-4S]-[ferredoxin] + 2 ADP + 2 phosphate = protochlorophyllide a + reduced 2[4Fe-4S]-[ferredoxin] + 2 ATP + 2 H2O. It participates in porphyrin-containing compound metabolism; bacteriochlorophyll biosynthesis (light-independent). In terms of biological role, component of the dark-operative protochlorophyllide reductase (DPOR) that uses Mg-ATP and reduced ferredoxin to reduce ring D of protochlorophyllide (Pchlide) to form chlorophyllide a (Chlide). This reaction is light-independent. The L component serves as a unique electron donor to the NB-component of the complex, and binds Mg-ATP. This Pelodictyon phaeoclathratiforme (strain DSM 5477 / BU-1) protein is Light-independent protochlorophyllide reductase iron-sulfur ATP-binding protein.